Consider the following 130-residue polypeptide: Small ribosomal subunit protein uS8 (130 aa).

This sequence belongs to the universal ribosomal protein uS8 family. In terms of assembly, part of the 30S ribosomal subunit. Contacts proteins S5 and S12.

Functionally, one of the primary rRNA binding proteins, it binds directly to 16S rRNA central domain where it helps coordinate assembly of the platform of the 30S subunit. The chain is Small ribosomal subunit protein uS8 from Pseudomonas syringae pv. tomato (strain ATCC BAA-871 / DC3000).